We begin with the raw amino-acid sequence, 484 residues long: MSPNISLDNTYITLPEEFYTEQLPSKVPSPKLVKWNSTLAKELGLDSDFFQSEEGALVLSGNQILEDTTPIAEAYAGHQFGYFTMLGDGRAVLLGEIVTNDEERYDIQLKGSGRTPYSRGGDGKATLGPMLREYIISEGMKGLGIPSTRSLAVLTTGETILRETALPGAILVRVAKSHIRVGTFQFANQFLDTKELKALADYTIKRHYKEIFTKEDRYRHFLHEVVKNQARLIAQWQLVGFIHGVMNTDNMVISGETIDYGPCAFMDTYHPETVFSSIDTEGRYAYQNQPKMASWDLARLAEALVPLLNDNTEKAIEIAQEEINQFSKLYLTFWYEGMRKKLGLFHENDMDEDLIEALLGLMVKYEADYTNTFRDLTLNQTTQPNLKGSAEYQQWLDLWQDRRKKQEESLEDSIKLMESVNPTVIPRNHRVEEALERAVNYHDYNAMDSLVSVLQHPYDYKNQNDYYATPPGKTACGYRTFCGT.

ATP is bound by residues glycine 87, glycine 89, arginine 90, lysine 110, aspartate 122, glycine 123, arginine 173, and arginine 180. The active-site Proton acceptor is aspartate 249. Mg(2+)-binding residues include asparagine 250 and aspartate 259. Residue aspartate 259 coordinates ATP.

The protein belongs to the SELO family. Mg(2+) serves as cofactor. It depends on Mn(2+) as a cofactor.

It catalyses the reaction L-seryl-[protein] + ATP = 3-O-(5'-adenylyl)-L-seryl-[protein] + diphosphate. The catalysed reaction is L-threonyl-[protein] + ATP = 3-O-(5'-adenylyl)-L-threonyl-[protein] + diphosphate. The enzyme catalyses L-tyrosyl-[protein] + ATP = O-(5'-adenylyl)-L-tyrosyl-[protein] + diphosphate. It carries out the reaction L-histidyl-[protein] + UTP = N(tele)-(5'-uridylyl)-L-histidyl-[protein] + diphosphate. It catalyses the reaction L-seryl-[protein] + UTP = O-(5'-uridylyl)-L-seryl-[protein] + diphosphate. The catalysed reaction is L-tyrosyl-[protein] + UTP = O-(5'-uridylyl)-L-tyrosyl-[protein] + diphosphate. Nucleotidyltransferase involved in the post-translational modification of proteins. It can catalyze the addition of adenosine monophosphate (AMP) or uridine monophosphate (UMP) to a protein, resulting in modifications known as AMPylation and UMPylation. The sequence is that of Protein nucleotidyltransferase YdiU from Lachnoclostridium phytofermentans (strain ATCC 700394 / DSM 18823 / ISDg) (Clostridium phytofermentans).